A 1136-amino-acid chain; its full sequence is Carbamoyl phosphate synthase large chain (1136 aa).

The interval M1–D402 is carboxyphosphate synthetic domain. ATP is bound by residues R129, R169, G175, G176, E208, I210, E215, G241, V242, H243, Q285, and E299. The 196-residue stretch at K133–L328 folds into the ATP-grasp 1 domain. The Mg(2+) site is built by Q285, E299, and N301. Mn(2+)-binding residues include Q285, E299, and N301. The oligomerization domain stretch occupies residues K403–T551. The tract at residues E552–Y962 is carbamoyl phosphate synthetic domain. One can recognise an ATP-grasp 2 domain in the interval G681 to A881. Positions 717, 765, 767, 772, 797, 798, 799, 800, 840, and 852 each coordinate ATP. Mg(2+) contacts are provided by Q840, E852, and N854. Mn(2+)-binding residues include Q840, E852, and N854. Residues E963–Q1136 are allosteric domain. The MGS-like domain occupies G964–L1122.

The protein belongs to the CarB family. Composed of two chains; the small (or glutamine) chain promotes the hydrolysis of glutamine to ammonia, which is used by the large (or ammonia) chain to synthesize carbamoyl phosphate. Tetramer of heterodimers (alpha,beta)4. It depends on Mg(2+) as a cofactor. Requires Mn(2+) as cofactor.

It catalyses the reaction hydrogencarbonate + L-glutamine + 2 ATP + H2O = carbamoyl phosphate + L-glutamate + 2 ADP + phosphate + 2 H(+). It carries out the reaction hydrogencarbonate + NH4(+) + 2 ATP = carbamoyl phosphate + 2 ADP + phosphate + 2 H(+). The protein operates within amino-acid biosynthesis; L-arginine biosynthesis; carbamoyl phosphate from bicarbonate: step 1/1. It functions in the pathway pyrimidine metabolism; UMP biosynthesis via de novo pathway; (S)-dihydroorotate from bicarbonate: step 1/3. Large subunit of the glutamine-dependent carbamoyl phosphate synthetase (CPSase). CPSase catalyzes the formation of carbamoyl phosphate from the ammonia moiety of glutamine, carbonate, and phosphate donated by ATP, constituting the first step of 2 biosynthetic pathways, one leading to arginine and/or urea and the other to pyrimidine nucleotides. The large subunit (synthetase) binds the substrates ammonia (free or transferred from glutamine from the small subunit), hydrogencarbonate and ATP and carries out an ATP-coupled ligase reaction, activating hydrogencarbonate by forming carboxy phosphate which reacts with ammonia to form carbamoyl phosphate. This is Carbamoyl phosphate synthase large chain from Bifidobacterium animalis subsp. lactis (strain AD011).